Here is a 241-residue protein sequence, read N- to C-terminus: Probable transcriptional regulatory protein RSc2190 (241 aa).

This sequence belongs to the TACO1 family.

Its subcellular location is the cytoplasm. This chain is Probable transcriptional regulatory protein RSc2190, found in Ralstonia nicotianae (strain ATCC BAA-1114 / GMI1000) (Ralstonia solanacearum).